The chain runs to 241 residues: Triosephosphate isomerase (241 aa).

A substrate-binding site is contributed by 9 to 11 (NWK). Residue His96 is the Electrophile of the active site. Glu165 (proton acceptor) is an active-site residue. Substrate is bound by residues Gly171, Ser204, and 225-226 (GG).

It belongs to the triosephosphate isomerase family. In terms of assembly, homodimer.

Its subcellular location is the cytoplasm. The enzyme catalyses D-glyceraldehyde 3-phosphate = dihydroxyacetone phosphate. Its pathway is carbohydrate biosynthesis; gluconeogenesis. It participates in carbohydrate degradation; glycolysis; D-glyceraldehyde 3-phosphate from glycerone phosphate: step 1/1. Functionally, involved in the gluconeogenesis. Catalyzes stereospecifically the conversion of dihydroxyacetone phosphate (DHAP) to D-glyceraldehyde-3-phosphate (G3P). The chain is Triosephosphate isomerase from Trichormus variabilis (strain ATCC 29413 / PCC 7937) (Anabaena variabilis).